The sequence spans 247 residues: Uridylate kinase (247 aa).

18 to 21 (KLSG) is an ATP binding site. Gly60 contacts UMP. Residues Gly61 and Arg65 each contribute to the ATP site. Residues Asp80 and 141–148 (TGNPFFTT) each bind UMP. 3 residues coordinate ATP: Thr168, Tyr174, and Asp177.

The protein belongs to the UMP kinase family. Homohexamer.

It localises to the cytoplasm. It catalyses the reaction UMP + ATP = UDP + ADP. It functions in the pathway pyrimidine metabolism; CTP biosynthesis via de novo pathway; UDP from UMP (UMPK route): step 1/1. Inhibited by UTP. In terms of biological role, catalyzes the reversible phosphorylation of UMP to UDP. In Ectopseudomonas mendocina (strain ymp) (Pseudomonas mendocina), this protein is Uridylate kinase.